The following is a 128-amino-acid chain: Azurin (128 aa).

Residues 1 to 128 (AECSVDIQGN…ALMKGTLTLK (128 aa)) enclose the Plastocyanin-like domain. The cysteines at positions 3 and 26 are disulfide-linked. Residues His-46, Cys-112, His-117, and Met-121 each coordinate Cu cation.

Its subcellular location is the periplasm. Functionally, transfers electrons from cytochrome c551 to cytochrome oxidase. This is Azurin from Pseudomonas aeruginosa.